Reading from the N-terminus, the 156-residue chain is SsrA-binding protein (156 aa).

Belongs to the SmpB family.

The protein localises to the cytoplasm. Its function is as follows. Required for rescue of stalled ribosomes mediated by trans-translation. Binds to transfer-messenger RNA (tmRNA), required for stable association of tmRNA with ribosomes. tmRNA and SmpB together mimic tRNA shape, replacing the anticodon stem-loop with SmpB. tmRNA is encoded by the ssrA gene; the 2 termini fold to resemble tRNA(Ala) and it encodes a 'tag peptide', a short internal open reading frame. During trans-translation Ala-aminoacylated tmRNA acts like a tRNA, entering the A-site of stalled ribosomes, displacing the stalled mRNA. The ribosome then switches to translate the ORF on the tmRNA; the nascent peptide is terminated with the 'tag peptide' encoded by the tmRNA and targeted for degradation. The ribosome is freed to recommence translation, which seems to be the essential function of trans-translation. In Staphylococcus epidermidis (strain ATCC 35984 / DSM 28319 / BCRC 17069 / CCUG 31568 / BM 3577 / RP62A), this protein is SsrA-binding protein.